We begin with the raw amino-acid sequence, 172 residues long: Adenine phosphoribosyltransferase (172 aa).

Belongs to the purine/pyrimidine phosphoribosyltransferase family. As to quaternary structure, homodimer.

It localises to the cytoplasm. The catalysed reaction is AMP + diphosphate = 5-phospho-alpha-D-ribose 1-diphosphate + adenine. It functions in the pathway purine metabolism; AMP biosynthesis via salvage pathway; AMP from adenine: step 1/1. Catalyzes a salvage reaction resulting in the formation of AMP, that is energically less costly than de novo synthesis. This is Adenine phosphoribosyltransferase from Methanococcus maripaludis (strain C5 / ATCC BAA-1333).